Consider the following 403-residue polypeptide: Probable tRNA sulfurtransferase (403 aa).

In terms of domain architecture, THUMP spans 60-165 (QLAEERLKPI…KEGVFLSCRT (106 aa)). Residues 183-184 (ML), 208-209 (HF), Arg-265, Gly-287, and Gln-296 each bind ATP.

It belongs to the ThiI family.

The protein resides in the cytoplasm. It catalyses the reaction [ThiI sulfur-carrier protein]-S-sulfanyl-L-cysteine + a uridine in tRNA + 2 reduced [2Fe-2S]-[ferredoxin] + ATP + H(+) = [ThiI sulfur-carrier protein]-L-cysteine + a 4-thiouridine in tRNA + 2 oxidized [2Fe-2S]-[ferredoxin] + AMP + diphosphate. The enzyme catalyses [ThiS sulfur-carrier protein]-C-terminal Gly-Gly-AMP + S-sulfanyl-L-cysteinyl-[cysteine desulfurase] + AH2 = [ThiS sulfur-carrier protein]-C-terminal-Gly-aminoethanethioate + L-cysteinyl-[cysteine desulfurase] + A + AMP + 2 H(+). It functions in the pathway cofactor biosynthesis; thiamine diphosphate biosynthesis. Catalyzes the ATP-dependent transfer of a sulfur to tRNA to produce 4-thiouridine in position 8 of tRNAs, which functions as a near-UV photosensor. Also catalyzes the transfer of sulfur to the sulfur carrier protein ThiS, forming ThiS-thiocarboxylate. This is a step in the synthesis of thiazole, in the thiamine biosynthesis pathway. The sulfur is donated as persulfide by IscS. This is Probable tRNA sulfurtransferase from Listeria innocua serovar 6a (strain ATCC BAA-680 / CLIP 11262).